The following is a 193-amino-acid chain: Superoxide dismutase [Fe] (193 aa).

The Fe cation site is built by H27, H75, D159, and H163.

Belongs to the iron/manganese superoxide dismutase family. As to quaternary structure, homodimer. Fe cation is required as a cofactor.

It carries out the reaction 2 superoxide + 2 H(+) = H2O2 + O2. In terms of biological role, destroys superoxide anion radicals which are normally produced within the cells and which are toxic to biological systems. The sequence is that of Superoxide dismutase [Fe] (sodB) from Bacteroides fragilis (strain YCH46).